Here is a 435-residue protein sequence, read N- to C-terminus: Methylenetetrahydrofolate--tRNA-(uracil-5-)-methyltransferase TrmFO (435 aa).

Residue 9 to 14 (GAGLAG) coordinates FAD.

It belongs to the MnmG family. TrmFO subfamily. The cofactor is FAD.

Its subcellular location is the cytoplasm. The catalysed reaction is uridine(54) in tRNA + (6R)-5,10-methylene-5,6,7,8-tetrahydrofolate + NADH + H(+) = 5-methyluridine(54) in tRNA + (6S)-5,6,7,8-tetrahydrofolate + NAD(+). It carries out the reaction uridine(54) in tRNA + (6R)-5,10-methylene-5,6,7,8-tetrahydrofolate + NADPH + H(+) = 5-methyluridine(54) in tRNA + (6S)-5,6,7,8-tetrahydrofolate + NADP(+). In terms of biological role, catalyzes the folate-dependent formation of 5-methyl-uridine at position 54 (M-5-U54) in all tRNAs. In Staphylococcus aureus (strain Newman), this protein is Methylenetetrahydrofolate--tRNA-(uracil-5-)-methyltransferase TrmFO.